Here is a 73-residue protein sequence, read N- to C-terminus: UPF0346 protein lp_1865 (73 aa).

Belongs to the UPF0346 family.

The polypeptide is UPF0346 protein lp_1865 (Lactiplantibacillus plantarum (strain ATCC BAA-793 / NCIMB 8826 / WCFS1) (Lactobacillus plantarum)).